Here is a 325-residue protein sequence, read N- to C-terminus: Tetraacyldisaccharide 4'-kinase (325 aa).

Position 55 to 62 (55 to 62 (TAGGNGKT)) interacts with ATP.

The protein belongs to the LpxK family.

The enzyme catalyses a lipid A disaccharide + ATP = a lipid IVA + ADP + H(+). The protein operates within glycolipid biosynthesis; lipid IV(A) biosynthesis; lipid IV(A) from (3R)-3-hydroxytetradecanoyl-[acyl-carrier-protein] and UDP-N-acetyl-alpha-D-glucosamine: step 6/6. Functionally, transfers the gamma-phosphate of ATP to the 4'-position of a tetraacyldisaccharide 1-phosphate intermediate (termed DS-1-P) to form tetraacyldisaccharide 1,4'-bis-phosphate (lipid IVA). The polypeptide is Tetraacyldisaccharide 4'-kinase (Cronobacter sakazakii (strain ATCC BAA-894) (Enterobacter sakazakii)).